The chain runs to 528 residues: GMP synthase [glutamine-hydrolyzing] (528 aa).

Residues 3 to 199 (KVAIIDFGSQ…FLDIAGCQKD (197 aa)) enclose the Glutamine amidotransferase type-1 domain. Cysteine 83 serves as the catalytic Nucleophile. Active-site residues include histidine 174 and glutamate 176. A GMPS ATP-PPase domain is found at 200-394 (WTVTSFIDDQ…LGISTEILMR (195 aa)). 227–233 (SGGVDSS) contacts ATP.

As to quaternary structure, homodimer.

It carries out the reaction XMP + L-glutamine + ATP + H2O = GMP + L-glutamate + AMP + diphosphate + 2 H(+). Its pathway is purine metabolism; GMP biosynthesis; GMP from XMP (L-Gln route): step 1/1. Catalyzes the synthesis of GMP from XMP. In Ehrlichia ruminantium (strain Gardel), this protein is GMP synthase [glutamine-hydrolyzing].